Here is a 264-residue protein sequence, read N- to C-terminus: Small ribosomal subunit protein eS1 (264 aa).

An N6-acetyllysine; alternate modification is found at lysine 34. Lysine 34 is covalently cross-linked (Glycyl lysine isopeptide (Lys-Gly) (interchain with G-Cter in SUMO2); alternate). N6-acetyllysine is present on lysine 56. At tyrosine 155 the chain carries ADP-ribosyltyrosine. Positions 233-264 (GEGGSSGKAAGDETGAKVERADGYEPPVQESV) are disordered. Serine 237 carries the post-translational modification Phosphoserine. The span at 242–255 (AGDETGAKVERADG) shows a compositional bias: basic and acidic residues. Lysine 249 bears the N6-acetyllysine; alternate mark. Lysine 249 participates in a covalent cross-link: Glycyl lysine isopeptide (Lys-Gly) (interchain with G-Cter in SUMO2); alternate. Phosphotyrosine is present on tyrosine 256. A Phosphoserine modification is found at serine 263.

The protein belongs to the eukaryotic ribosomal protein eS1 family. Component of the small ribosomal subunit. Mature ribosomes consist of a small (40S) and a large (60S) subunit. The 40S subunit contains about 33 different proteins and 1 molecule of RNA (18S). The 60S subunit contains about 49 different proteins and 3 molecules of RNA (28S, 5.8S and 5S). Identified in a IGF2BP1-dependent mRNP granule complex containing untranslated mRNAs. Binds with high affinity to IPO4. Interacts with DDIT3. Part of the small subunit (SSU) processome, composed of more than 70 proteins and the RNA chaperone small nucleolar RNA (snoRNA) U3. Post-translationally, ADP-ribosylated at Tyr-155 by PARP1 in presence of HPF1.

It localises to the cytoplasm. It is found in the nucleus. Its subcellular location is the nucleolus. In terms of biological role, component of the small ribosomal subunit. The ribosome is a large ribonucleoprotein complex responsible for the synthesis of proteins in the cell. Part of the small subunit (SSU) processome, first precursor of the small eukaryotic ribosomal subunit. During the assembly of the SSU processome in the nucleolus, many ribosome biogenesis factors, an RNA chaperone and ribosomal proteins associate with the nascent pre-rRNA and work in concert to generate RNA folding, modifications, rearrangements and cleavage as well as targeted degradation of pre-ribosomal RNA by the RNA exosome. May play a role during erythropoiesis through regulation of transcription factor DDIT3. This chain is Small ribosomal subunit protein eS1 (Rps3a), found in Mus musculus (Mouse).